The primary structure comprises 590 residues: Guanylate-binding protein 1 (590 aa).

The GTPase domain (Globular) stretch occupies residues 1 to 309; the sequence is MASEIHMTGP…NAISSGDLPC (309 aa). Positions 35 to 276 constitute a GB1/RHD3-type G domain; that stretch reads TQPVVVVAIV…FCSYIFSNSK (242 aa). GTP is bound by residues 45-52, 67-69, and 97-101; these read GLYRTGKS, LGS, and DTEGL. Ser156 bears the Phosphoserine mark. Position 587 is a cysteine methyl ester (Cys587). Residue Cys587 is the site of S-farnesyl cysteine attachment. The residue at position 588 (Thr588) is a Phosphothreonine. A propeptide spans 588–590 (removed in mature form); the sequence is TIS.

This sequence belongs to the TRAFAC class dynamin-like GTPase superfamily. GB1/RHD3 GTPase family. GB1 subfamily. In terms of assembly, homodimer; homodimerization occurs upon GTP-binding and is required for the second hydrolysis step from GDP to GMP. Undergoes conformational changes and oligomerization upon GTP-binding and hydrolysis. Heterodimer with other family members, including GBP2, GBP3, GBP4 and GBP5. Dimerization regulates subcellular location to membranous structures. Interacts with SQSTM1. Interacts (when phosphorylated) with 14-3-3 protein sigma (SFN); leading to GBP1 retention in the cytosol and inactivation. Post-translationally, isoprenylation is required for proper subcellular location. In terms of processing, phosphorylated at Ser-156 by PIM1 in absence of infection, inhibits GBP1: phosphorylation promotes interaction with 14-3-3 protein sigma (SFN), leading to GBP1 retention in the cytosol. Dephosphorylated in response to infection, liberating GBP1.

Its subcellular location is the cytoplasmic vesicle membrane. The protein localises to the golgi apparatus membrane. It is found in the cell membrane. The protein resides in the cytoplasm. It localises to the cytosol. Its subcellular location is the secreted. The catalysed reaction is GTP + H2O = GDP + phosphate + H(+). It carries out the reaction GDP + H2O = GMP + phosphate + H(+). Its function is as follows. Interferon (IFN)-inducible GTPase that plays important roles in innate immunity against a diverse range of bacterial, viral and protozoan pathogens. Hydrolyzes GTP to GMP in two consecutive cleavage reactions: GTP is first hydrolyzed to GDP and then to GMP in a processive manner. Following infection, recruited to the pathogen-containing vacuoles or vacuole-escaped bacteria and promotes both inflammasome assembly and autophagy. Acts as a positive regulator of inflammasome assembly by facilitating the detection of inflammasome ligands from pathogens. Involved in the lysis of pathogen-containing vacuoles, releasing pathogens into the cytosol. Following pathogen release in the cytosol, forms a protein coat in a GTPase-dependent manner that encapsulates pathogens and promotes the detection of ligands by pattern recognition receptors. Plays a key role in inflammasome assembly in response to infection by Gram-negative bacteria: following pathogen release in the cytosol, forms a protein coat that encapsulates Gram-negative bacteria and directly binds to lipopolysaccharide (LPS), disrupting the O-antigen barrier and unmasking lipid A that is that detected by the non-canonical inflammasome effector CASP4/CASP11. Also promotes recruitment of proteins that mediate bacterial cytolysis, leading to release double-stranded DNA (dsDNA) that activates the AIM2 inflammasome. Involved in autophagy by regulating bacteriolytic peptide generation via its interaction with ubiquitin-binding protein SQSTM1, which delivers monoubiquitinated proteins to autolysosomes for the generation of bacteriolytic peptides. Confers protection to several pathogens, including the bacterial pathogens L.monocytogenes and M.bovis BCG as well as the protozoan pathogen T.gondii. Exhibits antiviral activity against influenza virus. In Chlorocebus aethiops (Green monkey), this protein is Guanylate-binding protein 1 (GBP1).